A 316-amino-acid polypeptide reads, in one-letter code: Retinol dehydrogenase 11 (316 aa).

The helical; Signal-anchor for type II membrane protein transmembrane segment at 1-21 (MFGFLLLLSLPFILYLVTPKI) threads the bilayer. At 22 to 316 (RKMLSSGVCT…CDLLGLPVDW (295 aa)) the chain is on the cytoplasmic side. An NADP(+)-binding site is contributed by 45 to 51 (GANTGIG). Lys109 is subject to N6-acetyllysine. Ser174 serves as a coordination point for substrate. Tyr199 functions as the Proton acceptor in the catalytic mechanism.

This sequence belongs to the short-chain dehydrogenases/reductases (SDR) family. Post-translationally, not glycosylated. In terms of tissue distribution, expressed at high level in liver and testis. Expressed at lower levels in smooth muscle, thymus, submaxillary gland and epididymis. In testis, expression is restricted to pachytene spermatocytes. Also expressed in four layers of the retina, including the outer segment of rods and cones.

It localises to the endoplasmic reticulum membrane. It carries out the reaction all-trans-retinol + NADP(+) = all-trans-retinal + NADPH + H(+). The enzyme catalyses 11-cis-retinol + NADP(+) = 11-cis-retinal + NADPH + H(+). The catalysed reaction is 9-cis-retinol + NADP(+) = 9-cis-retinal + NADPH + H(+). It catalyses the reaction 13-cis-retinol + NADP(+) = 13-cis-retinal + NADPH + H(+). It carries out the reaction a medium-chain primary fatty alcohol + NADP(+) = a medium-chain fatty aldehyde + NADPH + H(+). The enzyme catalyses (2E,6Z)-nona-2,6-dien-1-ol + NADP(+) = (2E,6Z)-nona-2,6-dienal + NADPH + H(+). The catalysed reaction is (E)-oct-2-en-1-ol + NADP(+) = (2E)-octenal + NADPH + H(+). It catalyses the reaction (E)-non-2-en-1-ol + NADP(+) = (E)-non-2-enal + NADPH + H(+). It carries out the reaction heptan-1-ol + NADP(+) = heptanal + NADPH + H(+). The enzyme catalyses hexan-1-ol + NADP(+) = hexanal + NADPH + H(+). The catalysed reaction is decan-1-ol + NADP(+) = decanal + NADPH + H(+). It catalyses the reaction nonan-1-ol + NADP(+) = nonanal + NADPH + H(+). It carries out the reaction octan-1-ol + NADP(+) = octanal + NADPH + H(+). The enzyme catalyses (Z)-non-6-en-1-ol + NADP(+) = (Z)-non-6-enal + NADPH + H(+). The protein operates within cofactor metabolism; retinol metabolism. Retinol dehydrogenase with a clear preference for NADP. Displays high activity towards 9-cis, 11-cis and all-trans-retinol, and to a lesser extent on 13-cis-retinol. Also exhibits reductive activity towards toxic lipid peroxidation products such as medium-chain aldehydes trans-2-nonenal, nonanal, and cis-6-nonenal. Has no dehydrogenase activity towards steroid. Seems to be required for homeostasis of retinol in liver and testis. This chain is Retinol dehydrogenase 11 (Rdh11), found in Mus musculus (Mouse).